Reading from the N-terminus, the 237-residue chain is D-aminoacyl-tRNA deacylase (237 aa).

The protein belongs to the DtdA deacylase family. In terms of assembly, monomer. The cofactor is Zn(2+).

The enzyme catalyses a D-aminoacyl-tRNA + H2O = a tRNA + a D-alpha-amino acid + H(+). It carries out the reaction glycyl-tRNA(Ala) + H2O = tRNA(Ala) + glycine + H(+). In terms of biological role, D-aminoacyl-tRNA deacylase with broad substrate specificity. By recycling D-aminoacyl-tRNA to D-amino acids and free tRNA molecules, this enzyme counteracts the toxicity associated with the formation of D-aminoacyl-tRNA entities in vivo. This is D-aminoacyl-tRNA deacylase from Metallosphaera sedula (strain ATCC 51363 / DSM 5348 / JCM 9185 / NBRC 15509 / TH2).